A 320-amino-acid chain; its full sequence is dTDP-glucose 4,6-dehydratase (320 aa).

Residues Phe-11 to Ile-12, Asp-38 to Gly-41, Asp-64 to Ile-65, Phe-84 to Thr-88, and Ser-103 each bind NAD(+). Position 88 (Thr-88) interacts with substrate. Position 128 (Thr-128) interacts with substrate. The active-site Proton donor is Asp-129. Active-site proton acceptor residues include Glu-130 and Tyr-152. Tyr-152–Lys-156 provides a ligand contact to NAD(+). Asn-181 contributes to the substrate binding site. Position 182 (Asn-182) interacts with NAD(+). Residues Lys-191–Met-192, Pro-207–Tyr-209, Arg-216, Asn-251, and Asp-274–His-278 each bind substrate.

Belongs to the NAD(P)-dependent epimerase/dehydratase family. dTDP-glucose dehydratase subfamily. Homodimer. NAD(+) serves as cofactor.

The catalysed reaction is dTDP-alpha-D-glucose = dTDP-4-dehydro-6-deoxy-alpha-D-glucose + H2O. In terms of biological role, probably involved in the biosynthesis of the acarviose moiety of the alpha-glucosidase inhibitor acarbose. Catalyzes the dehydration of dTDP-D-glucose to form dTDP-6-deoxy-D-xylo-4-hexulose via a three-step process involving oxidation, dehydration and reduction. The polypeptide is dTDP-glucose 4,6-dehydratase (Actinoplanes sp. (strain ATCC 31044 / CBS 674.73 / SE50/110)).